The following is a 202-amino-acid chain: FMN-dependent NADH:quinone oxidoreductase (202 aa).

Residues S10, 16 to 18 (SHS), and 96 to 99 (MYNF) each bind FMN.

The protein belongs to the azoreductase type 1 family. In terms of assembly, homodimer. It depends on FMN as a cofactor.

It catalyses the reaction 2 a quinone + NADH + H(+) = 2 a 1,4-benzosemiquinone + NAD(+). The catalysed reaction is N,N-dimethyl-1,4-phenylenediamine + anthranilate + 2 NAD(+) = 2-(4-dimethylaminophenyl)diazenylbenzoate + 2 NADH + 2 H(+). Quinone reductase that provides resistance to thiol-specific stress caused by electrophilic quinones. Functionally, also exhibits azoreductase activity. Catalyzes the reductive cleavage of the azo bond in aromatic azo compounds to the corresponding amines. This chain is FMN-dependent NADH:quinone oxidoreductase, found in Hydrogenovibrio crunogenus (strain DSM 25203 / XCL-2) (Thiomicrospira crunogena).